A 602-amino-acid chain; its full sequence is ATP-dependent lipid A-core flippase (602 aa).

Transmembrane regions (helical) follow at residues 28–48 (VGIFLLSIVGFVIFASTQPML), 84–104 (LLIILIAAWQGLGSFLGNYFL), 158–178 (IKVVIREGLTVVFLFAYLLWM), 180–200 (WHLTLVMVAILPVIAVMVSIA), and 268–288 (PMLQLVIYSAMAALMFLVLFL). One can recognise an ABC transmembrane type-1 domain in the interval 32–323 (LLSIVGFVIF…LSEVSSTIQK (292 aa)). The ABC transporter domain occupies 355–591 (LEVRNLSFTY…NGHYARLHAM (237 aa)). 389-396 (GRSGSGKS) provides a ligand contact to ATP.

The protein belongs to the ABC transporter superfamily. Lipid exporter (TC 3.A.1.106) family. In terms of assembly, homodimer.

The protein resides in the cell inner membrane. It catalyses the reaction ATP + H2O + lipid A-core oligosaccharideSide 1 = ADP + phosphate + lipid A-core oligosaccharideSide 2.. Involved in lipopolysaccharide (LPS) biosynthesis. Translocates lipid A-core from the inner to the outer leaflet of the inner membrane. Transmembrane domains (TMD) form a pore in the inner membrane and the ATP-binding domain (NBD) is responsible for energy generation. The chain is ATP-dependent lipid A-core flippase from Pseudomonas putida (strain ATCC 47054 / DSM 6125 / CFBP 8728 / NCIMB 11950 / KT2440).